The primary structure comprises 142 residues: Hemoglobin subunit alpha (142 aa).

The 141-residue stretch at 2–142 (VLSDADKTHV…VATVLTSKYR (141 aa)) folds into the Globin domain. S4 is subject to Phosphoserine. At K8 the chain carries N6-succinyllysine. T9 bears the Phosphothreonine mark. K12 is subject to N6-succinyllysine. K17 carries the N6-acetyllysine; alternate modification. K17 carries the N6-succinyllysine; alternate modification. Position 25 is a phosphotyrosine (Y25). S36 bears the Phosphoserine mark. K41 is subject to N6-succinyllysine. A Phosphoserine modification is found at S50. H59 is a binding site for O2. H88 contributes to the heme b binding site. S103 carries the phosphoserine modification. T109 is modified (phosphothreonine). Phosphoserine occurs at positions 125 and 132. T135 and T138 each carry phosphothreonine. At S139 the chain carries Phosphoserine.

It belongs to the globin family. Heterotetramer of two alpha chains and two beta chains. Red blood cells.

Functionally, involved in oxygen transport from the lung to the various peripheral tissues. In terms of biological role, hemopressin acts as an antagonist peptide of the cannabinoid receptor CNR1. Hemopressin-binding efficiently blocks cannabinoid receptor CNR1 and subsequent signaling. This is Hemoglobin subunit alpha (HBA) from Dasyurus viverrinus (Eastern quoll).